Here is a 535-residue protein sequence, read N- to C-terminus: Thermosome subunit gamma (535 aa).

This sequence belongs to the TCP-1 chaperonin family. Forms a Heterooligomeric complex of two stacked eight-membered rings.

Molecular chaperone; binds unfolded polypeptides in vitro, and has a weak ATPase activity. The protein is Thermosome subunit gamma (thsC) of Saccharolobus solfataricus (strain ATCC 35092 / DSM 1617 / JCM 11322 / P2) (Sulfolobus solfataricus).